The sequence spans 351 residues: Alcohol dehydrogenase 2 (351 aa).

The Zn(2+) site is built by cysteine 47, histidine 70, cysteine 101, cysteine 104, cysteine 107, cysteine 115, and cysteine 157. NAD(+) contacts are provided by residues 181-187 (GAGGGLG), aspartate 205, lysine 209, 271-273 (VGL), and arginine 343.

This sequence belongs to the zinc-containing alcohol dehydrogenase family. In terms of assembly, homotetramer. Zn(2+) serves as cofactor.

It carries out the reaction a primary alcohol + NAD(+) = an aldehyde + NADH + H(+). The catalysed reaction is a secondary alcohol + NAD(+) = a ketone + NADH + H(+). The polypeptide is Alcohol dehydrogenase 2 (sodh-2) (Caenorhabditis elegans).